Here is a 791-residue protein sequence, read N- to C-terminus: Calcium-transporting ATPase CtpE (791 aa).

3 consecutive transmembrane segments (helical) span residues 53 to 73 (LFVIVLSTGSVINGAFGLLII), 213 to 233 (ILQFITYLLVPAGLLTIYTQL), and 252 to 272 (VPMVPEGLVLMTSIAFAVGVV). The active-site 4-aspartylphosphate intermediate is Asp-299. Asp-299, Thr-301, and Asp-530 together coordinate Mg(2+). A run of 6 helical transmembrane segments spans residues 596–616 (VYSVLLAILVGIGGLSAKIFG), 627–647 (IHVTIAAWFTIGIPAFILSLA), 664–684 (AALPSGLVVGTATFVSYLVAY), 697–717 (ASTAALITLLASSLWVLAVVA), 725–745 (VLLVACSMLAYVLIFSIPLAQ), and 757–777 (VTSVALGIGLAGAALIEVLWW).

The protein belongs to the cation transport ATPase (P-type) (TC 3.A.3) family.

The protein resides in the cell membrane. It carries out the reaction Ca(2+)(in) + ATP + H2O = Ca(2+)(out) + ADP + phosphate + H(+). Functionally, P-type ATPase involved in specific uptake of calcium. Essential for growth and maintenance of cell surface integrity under Ca(2+)-deficient conditions. The sequence is that of Calcium-transporting ATPase CtpE from Mycolicibacterium smegmatis (strain ATCC 700084 / mc(2)155) (Mycobacterium smegmatis).